Consider the following 330-residue polypeptide: Phenylalanine--tRNA ligase alpha subunit (330 aa).

A Mg(2+)-binding site is contributed by Glu-246.

The protein belongs to the class-II aminoacyl-tRNA synthetase family. Phe-tRNA synthetase alpha subunit type 1 subfamily. As to quaternary structure, tetramer of two alpha and two beta subunits. Requires Mg(2+) as cofactor.

Its subcellular location is the cytoplasm. The enzyme catalyses tRNA(Phe) + L-phenylalanine + ATP = L-phenylalanyl-tRNA(Phe) + AMP + diphosphate + H(+). The protein is Phenylalanine--tRNA ligase alpha subunit of Campylobacter jejuni subsp. jejuni serotype O:6 (strain 81116 / NCTC 11828).